An 82-amino-acid polypeptide reads, in one-letter code: Small ribosomal subunit protein bS16 (82 aa).

This sequence belongs to the bacterial ribosomal protein bS16 family.

The sequence is that of Small ribosomal subunit protein bS16 from Pseudoalteromonas translucida (strain TAC 125).